The chain runs to 75 residues: U6-lycotoxin-Ls1d (75 aa).

The signal sequence occupies residues methionine 1–alanine 21. Positions glutamate 22–arginine 25 are excised as a propeptide.

Belongs to the neurotoxin 19 (CSTX) family. 06 (U6-Lctx) subfamily. Post-translationally, contains 4 disulfide bonds. Expressed by the venom gland.

It is found in the secreted. In Lycosa singoriensis (Wolf spider), this protein is U6-lycotoxin-Ls1d.